The sequence spans 423 residues: Large ribosomal subunit protein mL37 (423 aa).

Residues Met-1 to Gly-29 constitute a mitochondrion transit peptide.

The protein belongs to the mitochondrion-specific ribosomal protein mL37 family. In terms of assembly, component of the mitochondrial ribosome large subunit (39S) which comprises a 16S rRNA and about 50 distinct proteins.

The protein localises to the mitochondrion. The polypeptide is Large ribosomal subunit protein mL37 (Mrpl37) (Mus musculus (Mouse)).